Consider the following 508-residue polypeptide: Photosystem II CP47 reaction center protein (508 aa).

6 helical membrane-spanning segments follow: residues 21 to 36 (SVHI…WAGS), 101 to 115 (IVFS…IWHW), 140 to 156 (GIHL…FGAF), 203 to 218 (IAAG…FHLS), 237 to 252 (VLSS…AFVV), and 457 to 472 (SFAL…HGSR).

Belongs to the PsbB/PsbC family. PsbB subfamily. As to quaternary structure, PSII is composed of 1 copy each of membrane proteins PsbA, PsbB, PsbC, PsbD, PsbE, PsbF, PsbH, PsbI, PsbJ, PsbK, PsbL, PsbM, PsbT, PsbX, PsbY, PsbZ, Psb30/Ycf12, at least 3 peripheral proteins of the oxygen-evolving complex and a large number of cofactors. It forms dimeric complexes. It depends on Binds multiple chlorophylls. PSII binds additional chlorophylls, carotenoids and specific lipids. as a cofactor.

It is found in the plastid. The protein resides in the chloroplast thylakoid membrane. One of the components of the core complex of photosystem II (PSII). It binds chlorophyll and helps catalyze the primary light-induced photochemical processes of PSII. PSII is a light-driven water:plastoquinone oxidoreductase, using light energy to abstract electrons from H(2)O, generating O(2) and a proton gradient subsequently used for ATP formation. The chain is Photosystem II CP47 reaction center protein from Draba nemorosa (Woodland whitlowgrass).